Reading from the N-terminus, the 154-residue chain is MSIELDLQLAVENEHGLPSEAEFALWLTRTITPFQAQAEVTVRIVDEAESHALNLNYRGKDKPTNVLSFPFEAPSGMEMDLLGDLVICRQVVEREAIEQNKPLQAHWAHMVVHGSLHLLGYDHIEDDEAEEMESLETEIMQEMGFTDPYLAEKE.

His113, His117, and His123 together coordinate Zn(2+).

This sequence belongs to the endoribonuclease YbeY family. Requires Zn(2+) as cofactor.

It is found in the cytoplasm. Single strand-specific metallo-endoribonuclease involved in late-stage 70S ribosome quality control and in maturation of the 3' terminus of the 16S rRNA. In Vibrio cholerae serotype O1 (strain ATCC 39315 / El Tor Inaba N16961), this protein is Endoribonuclease YbeY.